Here is a 547-residue protein sequence, read N- to C-terminus: Heme-binding protein A (547 aa).

The first 18 residues, 1–18 (MKLKATLTLAAATLVLAA), serve as a signal peptide directing secretion. C19 is lipidated: N-palmitoyl cysteine. A lipid anchor (S-diacylglycerol cysteine) is attached at C19.

It belongs to the bacterial solute-binding protein 5 family.

Its subcellular location is the cell inner membrane. Functionally, important role in heme acquisition or metabolism. The protein is Heme-binding protein A (hbpA) of Haemophilus influenzae (strain ATCC 51907 / DSM 11121 / KW20 / Rd).